We begin with the raw amino-acid sequence, 610 residues long: Sulfite reductase [NADPH] flavoprotein alpha-component (610 aa).

Residues 68 to 206 (IIVISASQTG…EVDKWKEKVV (139 aa)) form the Flavodoxin-like domain. Residues 74–79 (SQTGNA), 121–124 (STHG), and 157–166 (LGDRSYEYFA) each bind FMN. Residues 243-459 (EFPLIAYLLN…VESNDNFRLP (217 aa)) enclose the FAD-binding FR-type domain. Residues Thr331, Ser365, 397–400 (RFYS), 415–417 (TVS), Tyr421, and 430–433 (GGAS) each bind FAD. Residues 530–531 (SR), 536–540 (KVYVQ), and Asp572 each bind NADP(+). Residue Tyr610 participates in FAD binding.

The protein belongs to the NADPH-dependent sulphite reductase flavoprotein subunit CysJ family. This sequence in the N-terminal section; belongs to the flavodoxin family. In the C-terminal section; belongs to the flavoprotein pyridine nucleotide cytochrome reductase family. As to quaternary structure, alpha(8)-beta(8). The alpha component is a flavoprotein, the beta component is a hemoprotein. It depends on FAD as a cofactor. The cofactor is FMN.

The enzyme catalyses hydrogen sulfide + 3 NADP(+) + 3 H2O = sulfite + 3 NADPH + 4 H(+). It participates in sulfur metabolism; hydrogen sulfide biosynthesis; hydrogen sulfide from sulfite (NADPH route): step 1/1. Component of the sulfite reductase complex that catalyzes the 6-electron reduction of sulfite to sulfide. This is one of several activities required for the biosynthesis of L-cysteine from sulfate. The flavoprotein component catalyzes the electron flow from NADPH -&gt; FAD -&gt; FMN to the hemoprotein component. This Blochmanniella floridana protein is Sulfite reductase [NADPH] flavoprotein alpha-component.